Reading from the N-terminus, the 650-residue chain is MSVTPPNVQFNLNGDSDHKSDNSSSSLENKLDTELKITSPPRNPPQRLHPVDFSEHADTDDDMNHPLPRVQSPVHIKNHIDPKLAEDRYRSSAARHFEPISIPPSAITSEDEDDYHGSANSSTVLPPRTENALHAASPKPSGSTGYTSPALSQNSGSGGEGESDEGSFNTQHHRSPIFQAYPSSEDLVGDPNDPYRRTRRAPIKTNPHDIPSQFIFRKLGLHHGKHGHHGHSGSLSLKSLVPNHHDKHDKHDKHEKHHSSLDLRRFFKSHQKTDKEKKPSVSKSKSSANLQDDHFGLFKKYGKFGRMLGSGAGGSVRIMKRSSDGKIFAVKEFRARRPTETEREYARKVTAEFCIGSALHHTNIIETLDIVEENKKFYEVMEYAPYDMFSIVMSGKMTMPEVYCCFKQLLSGVAYLHSMGLAHRDLKLDNLVVDSNCFVKIIDFGSAVVFKYPFEADIVEATGVVGSDPYLAPETLVRKLYDPRAVDIWSSAIIFCCMALRRFPWKYPKLSDNSFRLFCMKQPSNDAESPSDILADIKKQRLVEQGCEPIRKTDESHSPNSKTDNSSTHKQELYGPWRLLRLLPRETRAVIAHMLELDPVKRYDIHRVFADNWINDISMCHMENGKVIHSPTHVHNLVASEESPAPPAKH.

Over residues 1–14 the composition is skewed to polar residues; sequence MSVTPPNVQFNLNG. Disordered stretches follow at residues 1–210 and 222–288; these read MSVT…PHDI and HHGK…KSSA. Position 72 is a phosphoserine (Ser-72). Positions 78-98 are enriched in basic and acidic residues; sequence NHIDPKLAEDRYRSSAARHFE. Residues 140-154 show a composition bias toward polar residues; that stretch reads PSGSTGYTSPALSQN. 2 stretches are compositionally biased toward basic residues: residues 222–231 and 245–257; these read HHGKHGHHGH and HDKH…HEKH. Positions 258–279 are enriched in basic and acidic residues; it reads HSSLDLRRFFKSHQKTDKEKKP. Ser-286 is subject to Phosphoserine. In terms of domain architecture, Protein kinase spans 302 to 614; it reads GKFGRMLGSG…IHRVFADNWI (313 aa). Residues 308-316 and Lys-331 contribute to the ATP site; that span reads LGSGAGGSV. Asp-425 (proton acceptor) is an active-site residue. Residues 549–570 are disordered; it reads PIRKTDESHSPNSKTDNSSTHK.

It belongs to the protein kinase superfamily. Ser/Thr protein kinase family.

It is found in the cytoplasm. The enzyme catalyses L-seryl-[protein] + ATP = O-phospho-L-seryl-[protein] + ADP + H(+). It carries out the reaction L-threonyl-[protein] + ATP = O-phospho-L-threonyl-[protein] + ADP + H(+). Overexpression causes cell cycle arrest. The chain is Serine/threonine-protein kinase oca2 from Schizosaccharomyces pombe (strain 972 / ATCC 24843) (Fission yeast).